A 313-amino-acid chain; its full sequence is tRNA dimethylallyltransferase (313 aa).

11–18 is an ATP binding site; the sequence is GPTACGKT. A substrate-binding site is contributed by 13-18; it reads TACGKT. Interaction with substrate tRNA regions lie at residues 36-39, 160-164, and 243-248; these read DSAL, QRIGR, and RCVGYR.

The protein belongs to the IPP transferase family. In terms of assembly, monomer. Mg(2+) is required as a cofactor.

The enzyme catalyses adenosine(37) in tRNA + dimethylallyl diphosphate = N(6)-dimethylallyladenosine(37) in tRNA + diphosphate. Functionally, catalyzes the transfer of a dimethylallyl group onto the adenine at position 37 in tRNAs that read codons beginning with uridine, leading to the formation of N6-(dimethylallyl)adenosine (i(6)A). This chain is tRNA dimethylallyltransferase, found in Neisseria gonorrhoeae (strain NCCP11945).